A 149-amino-acid chain; its full sequence is MSGASARDATLLGFDYGEKRIGVAIGNALTRSARALVVIPNLNREHRFKAVGDLLAEWRPDALVVGLPMHPDGTPHEMTQQAKRFGNQLNGRFGLPVTWVDERYSSVEAEAGLRERNVRGRARAEMLDAEAARVILQQYLDQLSDHEHH.

It belongs to the YqgF nuclease family.

Its subcellular location is the cytoplasm. Its function is as follows. Could be a nuclease involved in processing of the 5'-end of pre-16S rRNA. The chain is Putative pre-16S rRNA nuclease from Burkholderia ambifaria (strain MC40-6).